We begin with the raw amino-acid sequence, 651 residues long: Mitogen-activated protein kinase kinase kinase 2 (651 aa).

In terms of domain architecture, Protein kinase spans 68–330; sequence WRKGQLIGRG…ASELLKHPFV (263 aa). ATP is bound by residues 74–82 and Lys97; that span reads IGRGAFGTV. Residues 105-130 adopt a coiled-coil conformation; the sequence is CASKEKTQAHIQELEEEVKLLKNLSH. Residues Lys108 and Lys110 each participate in a glycyl lysine isopeptide (Lys-Gly) (interchain with G-Cter in ubiquitin) cross-link. Asp196 acts as the Proton acceptor in catalysis. 3 disordered regions span residues 460–483, 537–601, and 618–651; these read GNGE…DENE, RGFL…VALS, and KRRE…SPGK. A compositionally biased stretch (basic and acidic residues) spans 464–477; it reads TETKVSMEVDHPSY. Polar residues predominate over residues 570–599; the sequence is SPESGNSSGAPKNSNASAGAEQESNSQSVA. The stretch at 605–628 forms a coiled coil; that stretch reads RKWKEELDQELERKRREITRQAGM.

The protein belongs to the protein kinase superfamily. STE Ser/Thr protein kinase family. MAP kinase kinase kinase subfamily. Expressed in roots and flowers.

It localises to the cytoplasm. It is found in the cytoskeleton. The catalysed reaction is L-seryl-[protein] + ATP = O-phospho-L-seryl-[protein] + ADP + H(+). The enzyme catalyses L-threonyl-[protein] + ATP = O-phospho-L-threonyl-[protein] + ADP + H(+). Involved in cortical microtubules organization and stabilization by regulating the phosphorylation state of microtubule-associated proteins such as MAP65-1. This is Mitogen-activated protein kinase kinase kinase 2 (ANP2) from Arabidopsis thaliana (Mouse-ear cress).